The following is a 165-amino-acid chain: METQRASFSLGRSSLWLLLLGLVVPSASAQDLSYREAVLRAVDQFNERSSEANLYRLLELDPPPEQDVEHPGARKPVSFTVKETVCPRTTPQPPEQCDFKENGLVKQCVGTVTRYWIRGDFDITCNNIQSAGLFRRLRDSIRRGQQKILEKARRIGERIKDIFRG.

Residues Met1–Ala29 form the signal peptide. The propeptide occupies Gln30–Ser130. 2 cysteine pairs are disulfide-bonded: Cys86-Cys97 and Cys108-Cys125. Position 164 is an arginine amide (Arg164).

It belongs to the cathelicidin family. In terms of tissue distribution, expressed in bone marrow myeloid cells, spleen and testis.

The protein resides in the secreted. In terms of biological role, exerts a potent antimicrobial activity. The protein is Cathelicidin-7 (CATHL7) of Bos taurus (Bovine).